Reading from the N-terminus, the 404-residue chain is Cysteine desulfurase IscS (404 aa).

Residues 75–76 (AT), N155, Q183, and 203–205 (SGH) each bind pyridoxal 5'-phosphate. N6-(pyridoxal phosphate)lysine is present on K206. T243 serves as a coordination point for pyridoxal 5'-phosphate. The Cysteine persulfide intermediate role is filled by C328. Position 328 (C328) interacts with [2Fe-2S] cluster.

The protein belongs to the class-V pyridoxal-phosphate-dependent aminotransferase family. NifS/IscS subfamily. As to quaternary structure, homodimer. Forms a heterotetramer with IscU, interacts with other sulfur acceptors. Requires pyridoxal 5'-phosphate as cofactor.

The protein localises to the cytoplasm. It carries out the reaction (sulfur carrier)-H + L-cysteine = (sulfur carrier)-SH + L-alanine. Its pathway is cofactor biosynthesis; iron-sulfur cluster biosynthesis. Its function is as follows. Master enzyme that delivers sulfur to a number of partners involved in Fe-S cluster assembly, tRNA modification or cofactor biosynthesis. Catalyzes the removal of elemental sulfur and selenium atoms from cysteine and selenocysteine to produce alanine. Functions as a sulfur delivery protein for Fe-S cluster synthesis onto IscU, an Fe-S scaffold assembly protein, as well as other S acceptor proteins. Also functions as a selenium delivery protein in the pathway for the biosynthesis of selenophosphate. The protein is Cysteine desulfurase IscS of Salmonella gallinarum (strain 287/91 / NCTC 13346).